The following is a 137-amino-acid chain: Histone H2B (137 aa).

A compositionally biased stretch (basic and acidic residues) spans Met-1–Pro-10. Positions Met-1–Lys-45 are disordered. Lys-8 and Lys-9 each carry N6-acetyllysine; alternate. Residues Lys-8 and Lys-9 each participate in a glycyl lysine isopeptide (Lys-Gly) (interchain with G-Cter in SUMO); alternate cross-link. The residue at position 13 (Lys-13) is an N6-acetyllysine. Lys-24 carries the post-translational modification N6-acetyllysine; alternate. Lys-24 participates in a covalent cross-link: Glycyl lysine isopeptide (Lys-Gly) (interchain with G-Cter in SUMO); alternate. A Glycyl lysine isopeptide (Lys-Gly) (interchain with G-Cter in SUMO) cross-link involves residue Lys-25. Lys-131 participates in a covalent cross-link: Glycyl lysine isopeptide (Lys-Gly) (interchain with G-Cter in ubiquitin).

This sequence belongs to the histone H2B family. As to quaternary structure, the nucleosome is a histone octamer containing two molecules each of H2A, H2B, H3 and H4 assembled in one H3-H4 heterotetramer and two H2A-H2B heterodimers. The octamer wraps approximately 147 bp of DNA. Monoubiquitinated to form H2BK123ub1. H2BK123ub1 gives a specific tag for epigenetic transcriptional activation and is also prerequisite for H3K4me and H3K79me formation. H2BK123ub1 also modulates the formation of double-strand breaks during meiosis and is a prerequisite for DNA-damage checkpoint activation. In terms of processing, acetylated by GCN5 to form H2BK11ac and H2BK16ac. H2BK16ac can also be formed by ESA1. Acetylation of N-terminal lysines and particularly formation of H2BK11acK16ac has a positive effect on transcription. Post-translationally, sumoylation to form H2BK6su or H2BK7su, and probably also H2BK16su or H2BK17su, occurs preferentially near the telomeres and represses gene transcription.

It is found in the nucleus. The protein resides in the chromosome. Core component of nucleosome. Nucleosomes wrap and compact DNA into chromatin, limiting DNA accessibility to the cellular machineries which require DNA as a template. Histones thereby play a central role in transcription regulation, DNA repair, DNA replication and chromosomal stability. DNA accessibility is regulated via a complex set of post-translational modifications of histones, also called histone code, and nucleosome remodeling. The protein is Histone H2B (HTB1) of Podospora anserina (Pleurage anserina).